Consider the following 63-residue polypeptide: UPF0434 protein GDI0182/Gdia_2252 (63 aa).

It belongs to the UPF0434 family.

This is UPF0434 protein GDI0182/Gdia_2252 from Gluconacetobacter diazotrophicus (strain ATCC 49037 / DSM 5601 / CCUG 37298 / CIP 103539 / LMG 7603 / PAl5).